The chain runs to 233 residues: MVRGRTELKRIENPTSRQVTFSKRRNGLLKKAFELSVLCDAEVALIVFSPRGRLYEFASAPSLQKTIDRYKAYTKDHVNNKTIQQDIQQVKDDTLGLAKKLEALDESRRKILGENLEGCSIEELRGLEMKLEKSLHNIRLKKTELLERQIAKLKEKERTLLKDNENLRGKHRNLEAAALVANHMTTTTAPAAWPRDVPMTSSTAGAADAMDVETDLYIGLPGTERSSNRSETG.

Residues 1–61 (MVRGRTELKR…GRLYEFASAP (61 aa)) form the MADS-box domain. The 91-residue stretch at 87–177 (IQQVKDDTLG…RGKHRNLEAA (91 aa)) folds into the K-box domain.

It localises to the nucleus. Probable transcription factor. This chain is MADS-box transcription factor 56 (MADS56), found in Oryza sativa subsp. indica (Rice).